A 217-amino-acid polypeptide reads, in one-letter code: tRNA (guanine-N(7)-)-methyltransferase (217 aa).

S-adenosyl-L-methionine contacts are provided by glutamate 56, glutamate 81, aspartate 108, and aspartate 130. Aspartate 130 is a catalytic residue. Substrate-binding residues include lysine 134 and aspartate 166.

It belongs to the class I-like SAM-binding methyltransferase superfamily. TrmB family.

It catalyses the reaction guanosine(46) in tRNA + S-adenosyl-L-methionine = N(7)-methylguanosine(46) in tRNA + S-adenosyl-L-homocysteine. It functions in the pathway tRNA modification; N(7)-methylguanine-tRNA biosynthesis. In terms of biological role, catalyzes the formation of N(7)-methylguanine at position 46 (m7G46) in tRNA. This is tRNA (guanine-N(7)-)-methyltransferase from Neorickettsia sennetsu (strain ATCC VR-367 / Miyayama) (Ehrlichia sennetsu).